A 539-amino-acid polypeptide reads, in one-letter code: Phosphatidylinositol 4-phosphate 5-kinase type-1 beta (539 aa).

The interval 1–21 (MSSTAENGDAVPGKQNEEKTY) is disordered. The 371-residue stretch at 25 to 395 (ASSAIKGAIQ…RFLKFMNSRV (371 aa)) folds into the PIPK domain. Phosphoserine occurs at positions 445, 447, and 448.

Interacts with RAC1, AJUBA, PLD1, PLD2 and ARF1. In terms of tissue distribution, highly expressed in brain and testis. Barely detectable in liver and skeletal muscle.

The protein localises to the cytoplasm. Its subcellular location is the cytosol. It localises to the cell membrane. The protein resides in the endomembrane system. The enzyme catalyses a 1,2-diacyl-sn-glycero-3-phospho-(1D-myo-inositol 4-phosphate) + ATP = a 1,2-diacyl-sn-glycero-3-phospho-(1D-myo-inositol-4,5-bisphosphate) + ADP + H(+). It carries out the reaction 1-octadecanoyl-2-(5Z,8Z,11Z,14Z)-eicosatetraenoyl-sn-glycero-3-phospho-1D-myo-inositol 4-phosphate + ATP = 1-octadecanoyl-2-(5Z,8Z,11Z,14Z)-eicosatetraenoyl-sn-glycero-3-phospho-1D-myo-inositol 4,5-bisphosphate + ADP + H(+). The catalysed reaction is 1-octadecanoyl-2-(9Z)-octadecenoyl-sn-glycero-3-phospho-1D-myo-inositol 4-phosphate + ATP = 1-octadecanoyl-2-(9Z)-octadecenoyl-sn-glycero-3-phospho-1D-myo-inositol 4,5-bisphosphate + ADP + H(+). It catalyses the reaction 1-octadecanoyl-2-(9Z)-octadecenoyl-sn-glycero-3-phospho-1D-myo-inositol + ATP = 1-octadecanoyl-2-(9Z)-octadecenoyl-sn-glycero-3-phospho-1D-myo-inositol 5-phosphate + ADP + H(+). The enzyme catalyses 1-octadecanoyl-2-(9Z,12Z)-octadecadienoyl-sn-glycero-3-phospho-1D-myo-inositol + ATP = 1-octadecanoyl-2-(9Z,12Z)-octadecadienoyl-sn-glycero-3-phospho-1D-myo-inositol 5-phosphate + ADP + H(+). It carries out the reaction 1-octadecanoyl-2-(5Z,8Z,11Z,14Z-eicosatetraenoyl)-sn-glycero-3-phospho-(1D-myo-inositol) + ATP = 1-octadecanoyl-2-(5Z,8Z,11Z,14Z)-eicosatetraenoyl-sn-glycero-3-phospho-1D-myo-inositol 5-phosphate + ADP + H(+). The catalysed reaction is 1,2-di-(9Z,12Z)-octadecadienoyl-sn-glycero-3-phospho-1D-myo-inositol + ATP = 1,2-di(9Z,12Z)-octadecadienoyl-sn-glycero-3-phospho-1D-myo-inositol 5-phosphate + ADP + H(+). Activated by phosphatidic acid. Functionally, catalyzes the phosphorylation of phosphatidylinositol 4-phosphate (PtdIns(4)P/PI4P) to form phosphatidylinositol 4,5-bisphosphate (PtdIns(4,5)P2/PIP2), a lipid second messenger that regulates several cellular processes such as signal transduction, vesicle trafficking, actin cytoskeleton dynamics, cell adhesion, and cell motility. PtdIns(4,5)P2 can directly act as a second messenger or can be utilized as a precursor to generate other second messengers: inositol 1,4,5-trisphosphate (IP3), diacylglycerol (DAG) or phosphatidylinositol-3,4,5-trisphosphate (PtdIns(3,4,5)P3/PIP3). Mediates RAC1-dependent reorganization of actin filaments. Contributes to the activation of phospholipase PLD2. Together with PIP5K1A, is required, after stimulation by G-protein coupled receptors, for the synthesis of IP3 that will induce stable platelet adhesion. The chain is Phosphatidylinositol 4-phosphate 5-kinase type-1 beta from Mus musculus (Mouse).